The sequence spans 644 residues: MPSKAENLRPSEPAPQPPEGRTLQGQLPGAPLAQRAGSPPDVPGSESPALACSTPATPSGEDPPARAAPIAPRPPARPRLERALSLDDKGWRRRRFRGSQEDLEARNGTSPSRGSVQSEGPGAPAHSCSPPCLSTSLQEIPKSRGVLSSERGSPSSGGNPLSGVASSSPNLPHRDAAVAGSSPRLPSLLPPRPPPALSLDIASDSLRTANKVDSDLADYKLRAQPLLVRAHSSLGPGRPRSPLACDDCSLRSAKSSFSLLAPIRSKDVRSRSYLEGSLLASGALLGADELARYFPDRNVALFVATWNMQGQKELPPSLDEFLLPAEADYAQDLYVIGVQEGCSDRREWETRLQETLGPHYVLLSSAAHGVLYMSLFIRRDLIWFCSEVECSTVTTRIVSQIKTKGALGISFTFFGTSFLFITSHFTSGDGKVAERLLDYTRTVQALALPRNVPDTNPYRSSAADVTTRFDEVFWFGDFNFRLSGGRTVVDALLCQGLVVDVPALLQHDQLIREMRKGSIFKGFQEPDIHFLPSYKFDIGKDTYDSTSKQRTPSYTDRVLYRSRHKGDICPVSYSSCPGIKTSDHRPVYGLFRVKVRPGRDNIPLAAGKFDRELYLLGIKRRISKEIQRQQALQSQNSSTICSVS.

A disordered region spans residues 1 to 193 (MPSKAENLRP…RLPSLLPPRP (193 aa)). 8 tandem repeats follow at residues 10–13 (PSEP), 15–18 (PQPP), 28–31 (PGAP), 39–42 (PPDV), 55–58 (PATP), 69–71 (PIA), 72–74 (PRP), and 75–78 (PARP). Residues 10 to 242 (PSEPAPQPPE…SLGPGRPRSP (233 aa)) form a 13 X 4 AA repeats of P-X-X-P region. Residues 78–90 (PRLERALSLDDKG) show a composition bias toward basic and acidic residues. The residue at position 99 (S99) is a Phosphoserine. A compositionally biased stretch (polar residues) spans 107 to 118 (NGTSPSRGSVQS). Repeat 9 spans residues 121–124 (PGAP). Residues 152-163 (GSPSSGGNPLSG) show a composition bias toward low complexity. 4 consecutive repeat copies span residues 169–172 (PNLP), 183–185 (PRL), 190–193 (PPRP), and 236–239 (PGRP). 2 positions are modified to phosphoserine: S241 and S256. C641 is subject to Cysteine methyl ester. A lipid anchor (S-farnesyl cysteine) is attached at C641. Residues 642 to 644 (SVS) constitute a propeptide, removed in mature form.

This sequence belongs to the inositol polyphosphate 5-phosphatase family. As to quaternary structure, interacts (when prenylated) with PDE6D; this is important for normal location in cilia.

It is found in the cytoplasm. The protein resides in the cytoskeleton. Its subcellular location is the cilium axoneme. It localises to the golgi apparatus. The protein localises to the golgi stack membrane. It is found in the cell membrane. The protein resides in the cell projection. Its subcellular location is the ruffle. It localises to the nucleus. The enzyme catalyses a 1,2-diacyl-sn-glycero-3-phospho-(1D-myo-inositol-4,5-bisphosphate) + H2O = a 1,2-diacyl-sn-glycero-3-phospho-(1D-myo-inositol 4-phosphate) + phosphate. It carries out the reaction a 1,2-diacyl-sn-glycero-3-phospho-(1D-myo-inositol-3,4,5-trisphosphate) + H2O = a 1,2-diacyl-sn-glycero-3-phospho-(1D-myo-inositol-3,4-bisphosphate) + phosphate. The catalysed reaction is a 1,2-diacyl-sn-glycero-3-phospho-(1D-myo-inositol-3,5-bisphosphate) + H2O = a 1,2-diacyl-sn-glycero-3-phospho-(1D-myo-inositol-3-phosphate) + phosphate. In terms of biological role, phosphatidylinositol (PtdIns) phosphatase that specifically hydrolyzes the 5-phosphate of phosphatidylinositol-3,4,5-trisphosphate (PtdIns(3,4,5)P3), phosphatidylinositol 4,5-bisphosphate(PtdIns(4,5)P2) and phosphatidylinositol 3,5-bisphosphate (PtdIns(3,5)P2). Specific for lipid substrates, inactive towards water soluble inositol phosphates. Plays an essential role in the primary cilium by controlling ciliary growth and phosphoinositide 3-kinase (PI3K) signaling and stability. The protein is Phosphatidylinositol polyphosphate 5-phosphatase type IV (INPP5E) of Pan troglodytes (Chimpanzee).